A 423-amino-acid polypeptide reads, in one-letter code: Histidine--tRNA ligase (423 aa).

This sequence belongs to the class-II aminoacyl-tRNA synthetase family. In terms of assembly, homodimer.

The protein resides in the cytoplasm. It catalyses the reaction tRNA(His) + L-histidine + ATP = L-histidyl-tRNA(His) + AMP + diphosphate + H(+). The sequence is that of Histidine--tRNA ligase from Actinobacillus succinogenes (strain ATCC 55618 / DSM 22257 / CCUG 43843 / 130Z).